The primary structure comprises 425 residues: UPF0761 membrane protein xcc-b100_3490 (425 aa).

6 consecutive transmembrane segments (helical) span residues 48–68, 105–125, 154–174, 182–202, 216–236, and 250–270; these read VFAL…FPAF, FTVA…HSIE, GTML…LPLF, LAEF…IVLI, ALPG…GFGF, and ALSA…SVLL.

Belongs to the UPF0761 family.

Its subcellular location is the cell inner membrane. In Xanthomonas campestris pv. campestris (strain B100), this protein is UPF0761 membrane protein xcc-b100_3490.